The sequence spans 157 residues: 2-C-methyl-D-erythritol 2,4-cyclodiphosphate synthase (157 aa).

A divalent metal cation contacts are provided by aspartate 8 and histidine 10. 4-CDP-2-C-methyl-D-erythritol 2-phosphate is bound by residues 8–10 (DVH) and 34–35 (HS). Histidine 42 lines the a divalent metal cation pocket. 4-CDP-2-C-methyl-D-erythritol 2-phosphate contacts are provided by residues 56–58 (DIG), 132–135 (TTNE), and arginine 142.

The protein belongs to the IspF family. Homotrimer. The cofactor is a divalent metal cation.

The enzyme catalyses 4-CDP-2-C-methyl-D-erythritol 2-phosphate = 2-C-methyl-D-erythritol 2,4-cyclic diphosphate + CMP. It functions in the pathway isoprenoid biosynthesis; isopentenyl diphosphate biosynthesis via DXP pathway; isopentenyl diphosphate from 1-deoxy-D-xylulose 5-phosphate: step 4/6. Its function is as follows. Involved in the biosynthesis of isopentenyl diphosphate (IPP) and dimethylallyl diphosphate (DMAPP), two major building blocks of isoprenoid compounds. Catalyzes the conversion of 4-diphosphocytidyl-2-C-methyl-D-erythritol 2-phosphate (CDP-ME2P) to 2-C-methyl-D-erythritol 2,4-cyclodiphosphate (ME-CPP) with a corresponding release of cytidine 5-monophosphate (CMP). This is 2-C-methyl-D-erythritol 2,4-cyclodiphosphate synthase from Chlorobium phaeovibrioides (strain DSM 265 / 1930) (Prosthecochloris vibrioformis (strain DSM 265)).